The following is a 273-amino-acid chain: Galactose-binding lectin (273 aa).

Positions 1-23 (MKPFCVFLTFFLLLAASSKKVDS) are cleaved as a signal peptide. Mn(2+)-binding residues include glutamate 144 and aspartate 146. Positions 146, 148, 150, and 155 each coordinate Ca(2+). Mn(2+) is bound by residues aspartate 155 and histidine 160.

The protein belongs to the leguminous lectin family. Homotetramer.

In terms of biological role, D-galactose specific lectin. The polypeptide is Galactose-binding lectin (Arachis hypogaea (Peanut)).